The primary structure comprises 255 residues: MNILIANDDGVFAPGIQALADALKPLGRVVVVAPESERSGFSSALTLDRPLRPIQIAEDVWAVNGTPADCVYLSMNGLFDFEFDLVVSGINSGANLGDDVLYSGTVGAAFEGRLMKQPAIAVSLAGPDVRSYDHKDDYAQAAKWVHDFIAKGLPALPPRHIFNINIPDVPQLKGTQITYQGRRAQSKPITSHVDPRGRQVYWIGLAGEAVTDPQRIASQIQSDFFAVANGFVSVTPIQMDATNYAVLEDLQASLG.

A divalent metal cation contacts are provided by D8, D9, S39, and N91.

The protein belongs to the SurE nucleotidase family. Requires a divalent metal cation as cofactor.

It is found in the cytoplasm. It carries out the reaction a ribonucleoside 5'-phosphate + H2O = a ribonucleoside + phosphate. Nucleotidase that shows phosphatase activity on nucleoside 5'-monophosphates. The protein is 5'-nucleotidase SurE of Acinetobacter baumannii (strain AB0057).